Reading from the N-terminus, the 469-residue chain is Probable cobyric acid synthase (469 aa).

The GATase cobBQ-type domain occupies 241–427 (SGSIGIVRYP…VHGILENNEF (187 aa)). The Nucleophile role is filled by Cys319. His419 is an active-site residue.

Belongs to the CobB/CobQ family. CobQ subfamily.

It participates in cofactor biosynthesis; adenosylcobalamin biosynthesis. Its function is as follows. Catalyzes amidations at positions B, D, E, and G on adenosylcobyrinic A,C-diamide. NH(2) groups are provided by glutamine, and one molecule of ATP is hydrogenolyzed for each amidation. In Picrophilus torridus (strain ATCC 700027 / DSM 9790 / JCM 10055 / NBRC 100828 / KAW 2/3), this protein is Probable cobyric acid synthase.